We begin with the raw amino-acid sequence, 100 residues long: Small ribosomal subunit protein uS14c (100 aa).

It belongs to the universal ribosomal protein uS14 family. In terms of assembly, part of the 30S ribosomal subunit.

Its subcellular location is the plastid. The protein localises to the chloroplast. Binds 16S rRNA, required for the assembly of 30S particles. This chain is Small ribosomal subunit protein uS14c, found in Ostreococcus tauri.